A 215-amino-acid polypeptide reads, in one-letter code: uncharacterized protein (215 aa).

6 helical membrane-spanning segments follow: residues 21–40 (IIKYLVIFFLFCIISTVLIN), 50–69 (LIFSVICLLISLIGFSSVIF), 95–117 (FFAIFISSTIGLVFVLPIIYVLF), 122–144 (LEIIFFFSSVWMILVLSSSLVVL), 156–178 (ANFVGTFIMPLLIPNIIMTGLIL), and 183–205 (LQLIFIMIGINLVFLPISFFLSS).

Belongs to the CcmB/CycW/HelB family.

It is found in the cell membrane. This is an uncharacterized protein from Rickettsia conorii (strain ATCC VR-613 / Malish 7).